Consider the following 183-residue polypeptide: Adenine phosphoribosyltransferase (183 aa).

The protein belongs to the purine/pyrimidine phosphoribosyltransferase family. In terms of assembly, homodimer.

The protein resides in the cytoplasm. The enzyme catalyses AMP + diphosphate = 5-phospho-alpha-D-ribose 1-diphosphate + adenine. The protein operates within purine metabolism; AMP biosynthesis via salvage pathway; AMP from adenine: step 1/1. Its function is as follows. Catalyzes a salvage reaction resulting in the formation of AMP, that is energically less costly than de novo synthesis. In Salmonella arizonae (strain ATCC BAA-731 / CDC346-86 / RSK2980), this protein is Adenine phosphoribosyltransferase.